A 562-amino-acid chain; its full sequence is MKKKKQALKVLLSVGILSSSFAFAHTSSAAPNNVLSTEKYNKEIKSPEFISGKLSGPSSQKAQDVVFHYMNTNKDKYKLGNESAQNSFKVTEVVKDPVEQATVVRLQQVYNNIPVWGSTQLAHVAKDGTLKVVSGTVAPDLDKKEKLKGQKQVDSKKAIQAAEKDLGFKPTYEKSPSSELYVYQNASDTTYAYVVNLNFLSPEPGNYYYFVDAISGKVLDKYNTIDSVAGPKADVKQAAKPAAKPVTGTNTIGSGKGVLGDTKSLKTTLSSSTYYLQDNTRGATIYTYDAKNRTSLPGTLWADTDNTYNATRDAAAVDAHYYAGVTYDYYKNKFNRNSYDNAGRPLKSTVHYSSGYNNAFWNGSQMVYGDGDGTTFVPLSGGLDVIGHELTHALTERSSNLIYQYESGALNEAISDIFGTLVEYYDNRNPDWEIGEDIYTPGTSGDALRSMSNPAKYGDPDHYSKRYTGSSDNGGVHTNSGIINKAAYLLANGGTHYGVTVTGIGGDKLGKIYYRANTLYFTQSTTFSQARAGLVQAAADLYGSGSQEVISVGKSFDAVGVQ.

An N-terminal signal peptide occupies residues 1–24 (MKKKKQALKVLLSVGILSSSFAFA). Positions 25–245 (HTSSAAPNNV…KQAAKPAAKP (221 aa)) are cleaved as a propeptide — activation peptide. Positions 303, 305, and 384 each coordinate Ca(2+). Zn(2+) is bound at residue His-388. The active site involves Glu-389. Zn(2+) is bound by residues His-392 and Glu-412. Glu-423, Asn-429, Asp-431, Glu-433, Glu-436, Tyr-439, Thr-440, and Asp-446 together coordinate Ca(2+). His-477 functions as the Proton donor in the catalytic mechanism.

Belongs to the peptidase M4 family. It depends on Ca(2+) as a cofactor. Requires Zn(2+) as cofactor.

Its subcellular location is the secreted. The enzyme catalyses Similar, but not identical, to that of thermolysin.. Its function is as follows. Extracellular zinc metalloprotease. The sequence is that of Bacillolysin from Priestia megaterium (strain ATCC 14581 / DSM 32 / CCUG 1817 / JCM 2506 / NBRC 15308 / NCIMB 9376 / NCTC 10342 / NRRL B-14308 / VKM B-512 / Ford 19) (Bacillus megaterium).